The primary structure comprises 105 residues: Large ribosomal subunit protein uL24 (105 aa).

The disordered stretch occupies residues 75-105; that stretch reads DSDGNPTRVGYRTDEESGKRVRISRKNGKDI. The span at 94 to 105 shows a compositional bias: basic residues; that stretch reads RVRISRKNGKDI.

The protein belongs to the universal ribosomal protein uL24 family. In terms of assembly, part of the 50S ribosomal subunit.

One of two assembly initiator proteins, it binds directly to the 5'-end of the 23S rRNA, where it nucleates assembly of the 50S subunit. Functionally, one of the proteins that surrounds the polypeptide exit tunnel on the outside of the subunit. The sequence is that of Large ribosomal subunit protein uL24 from Rhodococcus jostii (strain RHA1).